We begin with the raw amino-acid sequence, 549 residues long: CTP synthase (549 aa).

Residues 1–267 (MTKFVFVTGG…AAQVLSLLNL (267 aa)) form an amidoligase domain region. Ser-13 provides a ligand contact to CTP. Ser-13 provides a ligand contact to UTP. ATP contacts are provided by residues 14 to 19 (SIGKGI) and Asp-71. Residues Asp-71 and Glu-141 each contribute to the Mg(2+) site. Residues 148–150 (DIE), 188–193 (KTKPTQ), and Lys-224 contribute to the CTP site. Residues 188–193 (KTKPTQ) and Lys-224 contribute to the UTP site. The Glutamine amidotransferase type-1 domain occupies 292 to 534 (EIAIVGKYVR…VQAARTHSSD (243 aa)). Gly-354 contacts L-glutamine. The active-site Nucleophile; for glutamine hydrolysis is the Cys-381. L-glutamine is bound by residues 382–385 (LGMQ), Glu-405, and Arg-462. Catalysis depends on residues His-507 and Glu-509.

This sequence belongs to the CTP synthase family. As to quaternary structure, homotetramer.

The catalysed reaction is UTP + L-glutamine + ATP + H2O = CTP + L-glutamate + ADP + phosphate + 2 H(+). It carries out the reaction L-glutamine + H2O = L-glutamate + NH4(+). It catalyses the reaction UTP + NH4(+) + ATP = CTP + ADP + phosphate + 2 H(+). Its pathway is pyrimidine metabolism; CTP biosynthesis via de novo pathway; CTP from UDP: step 2/2. With respect to regulation, allosterically activated by GTP, when glutamine is the substrate; GTP has no effect on the reaction when ammonia is the substrate. The allosteric effector GTP functions by stabilizing the protein conformation that binds the tetrahedral intermediate(s) formed during glutamine hydrolysis. Inhibited by the product CTP, via allosteric rather than competitive inhibition. Functionally, catalyzes the ATP-dependent amination of UTP to CTP with either L-glutamine or ammonia as the source of nitrogen. Regulates intracellular CTP levels through interactions with the four ribonucleotide triphosphates. This Cyanothece sp. (strain PCC 7425 / ATCC 29141) protein is CTP synthase.